We begin with the raw amino-acid sequence, 199 residues long: MASSTCYATIPAMSCRGQSTITRFGPNNLFLGKQSYELPLMRRNAKFTVRSMREDNEKEEQQQQKQQQTHDGGPDLTPNRTEVTTKRTVDLFSFDGLAPERINGRSAMIGFVAAVGVELATGRDVFSQVFNGGVMWFLLTSAVLVLATLIPIYRGLSPEAKNNGFWNSDAEIWNGRFAMIGLVALAFTEYVKGGPLINV.

Residues 1 to 52 constitute a chloroplast transit peptide; sequence MASSTCYATIPAMSCRGQSTITRFGPNNLFLGKQSYELPLMRRNAKFTVRSM. A compositionally biased stretch (basic and acidic residues) spans 53 to 62; it reads REDNEKEEQQ. The segment at 53-82 is disordered; the sequence is REDNEKEEQQQQKQQQTHDGGPDLTPNRTE. 2 consecutive transmembrane segments (helical) span residues 130–152 and 172–191; these read FNGG…LIPI and IWNG…TEYV.

This sequence belongs to the ELIP/psbS family. Preferentially localized in the chloroplast-rich palisade parenchyma cells, in extracts of desiccated leaves, in seeds, but not in roots or untreated leaves.

Its subcellular location is the plastid. It localises to the chloroplast thylakoid membrane. Functionally, possibly exerts a protective role during water loss. The chain is Desiccation stress protein DSP-22, chloroplastic (DSP-22) from Craterostigma plantagineum (Blue gem).